The sequence spans 453 residues: Zinc finger and BTB domain-containing protein 44 (453 aa).

K4 participates in a covalent cross-link: Glycyl lysine isopeptide (Lys-Gly) (interchain with G-Cter in SUMO2). The BTB domain occupies 31–98 (CDITIRVQDR…AYTATLSINT (68 aa)). S135, S159, S161, S165, S191, S194, and S199 each carry phosphoserine. T200 bears the Phosphothreonine mark. The tract at residues 241 to 265 (QPEKAKQAENTRTLELPGPSEAGRR) is disordered. K290 participates in a covalent cross-link: Glycyl lysine isopeptide (Lys-Gly) (interchain with G-Cter in SUMO2). Disordered stretches follow at residues 295–324 (SDEE…PGSE) and 336–368 (SSSI…EDDR). Residues 304–318 (SQPVSASQSSLSDQQ) are compositionally biased toward low complexity. Polar residues predominate over residues 352 to 361 (TLQSTSSTNA). 2 consecutive C2H2-type zinc fingers follow at residues 399–421 (FQCP…MLIH) and 427–449 (FQCD…RLKH).

It localises to the nucleus. This Rattus norvegicus (Rat) protein is Zinc finger and BTB domain-containing protein 44 (Zbtb44).